Here is a 120-residue protein sequence, read N- to C-terminus: Large ribosomal subunit protein uL18 (120 aa).

Belongs to the universal ribosomal protein uL18 family. In terms of assembly, part of the 50S ribosomal subunit; part of the 5S rRNA/L5/L18/L25 subcomplex. Contacts the 5S and 23S rRNAs.

In terms of biological role, this is one of the proteins that bind and probably mediate the attachment of the 5S RNA into the large ribosomal subunit, where it forms part of the central protuberance. In Rhodospirillum rubrum (strain ATCC 11170 / ATH 1.1.1 / DSM 467 / LMG 4362 / NCIMB 8255 / S1), this protein is Large ribosomal subunit protein uL18.